The sequence spans 341 residues: Diguanylate cyclase DgcP (341 aa).

A GAF domain is found at 18 to 154 (SLESLVRQLL…LFAGLIAQYI (137 aa)). The region spanning 204–337 (HKIMIAFIDL…KQKTPFVAHP (134 aa)) is the GGDEF domain. Aspartate 212 contacts Mg(2+). Substrate is bound by residues asparagine 220, histidine 225, and aspartate 229. Aspartate 255 serves as a coordination point for Mg(2+). The active-site Proton acceptor is aspartate 255.

In terms of assembly, homodimer. The cofactor is Mg(2+).

It carries out the reaction 2 GTP = 3',3'-c-di-GMP + 2 diphosphate. It functions in the pathway purine metabolism; 3',5'-cyclic di-GMP biosynthesis. In terms of biological role, catalyzes the synthesis of cyclic-di-GMP (c-di-GMP) via the condensation of 2 GTP molecules. Cyclic-di-GMP is a second messenger which controls cell surface-associated traits in bacteria. In Escherichia coli (strain K12), this protein is Diguanylate cyclase DgcP.